The primary structure comprises 624 residues: Laccase-1 (624 aa).

An N-terminal signal peptide occupies residues 1–20 (MRGVVKLFFLSCSLVSLVSS). Plastocyanin-like domains follow at residues 69–183 (TKAL…HSPN) and 195–355 (DRIV…VVRY). Cu cation-binding residues include H117, H119, H162, and H164. C138 and C578 are oxidised to a cystine. N242, N320, and N430 each carry an N-linked (GlcNAc...) asparagine glycan. The 94-residue stretch at 469–562 (IIINNLDGVI…GKLAVVVIQP (94 aa)) folds into the Plastocyanin-like 3 domain. Cu cation contacts are provided by H480, H483, and H485. N-linked (GlcNAc...) asparagine glycosylation is present at N503. H543, C544, H545, and H549 together coordinate Cu cation. The tract at residues 582 to 603 (DPNAFGPARRSPSPSIQSSKTS) is disordered. Residues 592-603 (SPSPSIQSSKTS) are compositionally biased toward low complexity.

It belongs to the multicopper oxidase family. Requires Cu cation as cofactor.

It is found in the secreted. The protein localises to the cell wall. It catalyses the reaction 4 hydroquinone + O2 = 4 benzosemiquinone + 2 H2O. In terms of biological role, laccase that catalyzes the oxidation of certain aromatic compounds, including L-dopa, to quinones, which then polymerize to melanin. Able to oxidize a wide variety of aromatic diphenol and diamino groups in the ortho, meta, and para positions but not monophenolic groups such as in phenol, tyramine, or tyrosine. Plays an important role in virulence. Plays a role in dissemination to extrapulmonary sites but is not involved in pulmonary growth or in elicitation of cellular immune responses in the lung. The chain is Laccase-1 (LAC1) from Cryptococcus neoformans var. grubii serotype A (strain H99 / ATCC 208821 / CBS 10515 / FGSC 9487) (Filobasidiella neoformans var. grubii).